We begin with the raw amino-acid sequence, 235 residues long: UPF0758 protein CD630_11440 (235 aa).

The region spanning 113 to 235 (KIMNPWDIQR…YFSFKENMII (123 aa)) is the MPN domain. Zn(2+) is bound by residues His184, His186, and Asp197. The short motif at 184–197 (HNHPSGSVEPSRED) is the JAMM motif element.

It belongs to the UPF0758 family.

In Clostridioides difficile (strain 630) (Peptoclostridium difficile), this protein is UPF0758 protein CD630_11440.